Consider the following 999-residue polypeptide: Tyrosine-protein kinase Mer (999 aa).

The first 20 residues, 1–20, serve as a signal peptide directing secretion; it reads MGPAPLPLLLGLFLPALWRR. Residues 21 to 505 lie on the Extracellular side of the membrane; that stretch reads AITEAREEAK…PGNADPVLII (485 aa). 2 consecutive Ig-like C2-type domains span residues 81 to 186 and 197 to 273; these read PQVT…EIVS and PHFT…LTVS. N-linked (GlcNAc...) asparagine glycosylation is found at N114, N170, N207, N215, N234, N294, N316, N329, N336, N354, N389, N395, N442, and N454. An intrachain disulfide couples C115 to C175. Cysteines 218 and 262 form a disulfide. 2 consecutive Fibronectin type-III domains span residues 286 to 381 and 386 to 484; these read PPTE…TTEG and APLN…PAHG. A helical transmembrane segment spans residues 506–526; that stretch reads FGCFCGFILIGLILYISLAIR. At 527–999 the chain is on the cytoplasmic side; it reads KRVQETKFGN…DSSEGSEVLM (473 aa). Position 543 is a phosphoserine (S543). A Protein kinase domain is found at 587-858; sequence LILGKILGEG…VLRLQLEKLL (272 aa). ATP contacts are provided by residues 593 to 601 and K615; that span reads LGEGEFGSV. The Proton acceptor role is filled by D723. 4 positions are modified to phosphotyrosine; by autocatalysis: Y749, Y753, Y754, and Y872. A Phosphoserine modification is found at S935.

This sequence belongs to the protein kinase superfamily. Tyr protein kinase family. AXL/UFO subfamily. As to quaternary structure, interacts (upon activation) with TNK2; stimulates TNK2 autophosphorylation. Interacts (via N-terminus) with extracellular ligands LGALS3, TUB, TULP1 and GAS6. Interacts with VAV1 in a phosphotyrosine-independent manner. Interacts with TIMD4; this interaction enhances TIMD4-mediated efferocytosis. In terms of processing, autophosphorylated on Tyr-749, Tyr-753 and Tyr-754 in the activation loop allowing full activity. Autophosphorylated on Tyr-872 leading to recruitment of downstream partners of the signaling cascade such as PLCG2. In terms of tissue distribution, not expressed in normal B- and T-lymphocytes but is expressed in numerous neoplastic B- and T-cell lines. Highly expressed in testis, ovary, prostate, lung, and kidney, with lower expression in spleen, small intestine, colon, and liver.

The protein localises to the cell membrane. It carries out the reaction L-tyrosyl-[protein] + ATP = O-phospho-L-tyrosyl-[protein] + ADP + H(+). Its function is as follows. Receptor tyrosine kinase that transduces signals from the extracellular matrix into the cytoplasm by binding to several ligands including LGALS3, TUB, TULP1 or GAS6. Regulates many physiological processes including cell survival, migration, differentiation, and phagocytosis of apoptotic cells (efferocytosis). Ligand binding at the cell surface induces autophosphorylation of MERTK on its intracellular domain that provides docking sites for downstream signaling molecules. Following activation by ligand, interacts with GRB2 or PLCG2 and induces phosphorylation of MAPK1, MAPK2, FAK/PTK2 or RAC1. MERTK signaling plays a role in various processes such as macrophage clearance of apoptotic cells, platelet aggregation, cytoskeleton reorganization and engulfment. Functions in the retinal pigment epithelium (RPE) as a regulator of rod outer segments fragments phagocytosis. Also plays an important role in inhibition of Toll-like receptors (TLRs)-mediated innate immune response by activating STAT1, which selectively induces production of suppressors of cytokine signaling SOCS1 and SOCS3. The polypeptide is Tyrosine-protein kinase Mer (MERTK) (Homo sapiens (Human)).